Reading from the N-terminus, the 226-residue chain is Urease accessory protein UreG (226 aa).

The tract at residues 1-26 is disordered; it reads MPPHFLDGQPHGHTDRPRRVRQPGEP. 33-40 contributes to the GTP binding site; it reads GPVGSGKT.

The protein belongs to the SIMIBI class G3E GTPase family. UreG subfamily. Homodimer. UreD, UreF and UreG form a complex that acts as a GTP-hydrolysis-dependent molecular chaperone, activating the urease apoprotein by helping to assemble the nickel containing metallocenter of UreC. The UreE protein probably delivers the nickel.

Its subcellular location is the cytoplasm. Facilitates the functional incorporation of the urease nickel metallocenter. This process requires GTP hydrolysis, probably effectuated by UreG. The sequence is that of Urease accessory protein UreG from Mycolicibacterium vanbaalenii (strain DSM 7251 / JCM 13017 / BCRC 16820 / KCTC 9966 / NRRL B-24157 / PYR-1) (Mycobacterium vanbaalenii).